A 23-amino-acid chain; its full sequence is NLVQLGKMIFQETGKNPATSYGL.

Requires Ca(2+) as cofactor. In terms of processing, contains 7 disulfide bonds. Expressed by the venom gland.

Its subcellular location is the secreted. The catalysed reaction is a 1,2-diacyl-sn-glycero-3-phosphocholine + H2O = a 1-acyl-sn-glycero-3-phosphocholine + a fatty acid + H(+). In terms of biological role, snake venom phospholipase A2 (PLA2) that induces local edema a few hours after injection (5-10 ug) in the hind paw. PLA2 catalyzes the calcium-dependent hydrolysis of the 2-acyl groups in 3-sn-phosphoglycerides. This chain is Basic phospholipase A2 CTs-G6, found in Trimeresurus stejnegeri (Chinese green tree viper).